Consider the following 214-residue polypeptide: FMN-dependent NADH:quinone oxidoreductase 1 (214 aa).

FMN contacts are provided by residues 17-19 and 144-147; these read SWS and SAGG.

The protein belongs to the azoreductase type 1 family. As to quaternary structure, homodimer. The cofactor is FMN.

The catalysed reaction is 2 a quinone + NADH + H(+) = 2 a 1,4-benzosemiquinone + NAD(+). It carries out the reaction N,N-dimethyl-1,4-phenylenediamine + anthranilate + 2 NAD(+) = 2-(4-dimethylaminophenyl)diazenylbenzoate + 2 NADH + 2 H(+). In terms of biological role, quinone reductase that provides resistance to thiol-specific stress caused by electrophilic quinones. Functionally, also exhibits azoreductase activity. Catalyzes the reductive cleavage of the azo bond in aromatic azo compounds to the corresponding amines. The protein is FMN-dependent NADH:quinone oxidoreductase 1 of Lactococcus lactis subsp. lactis (strain IL1403) (Streptococcus lactis).